Consider the following 295-residue polypeptide: Reticulon-like protein 1 (295 aa).

Over Met-1–Asn-50 the chain is Cytoplasmic. The Reticulon domain maps to Asn-20–Ala-220. A helical membrane pass occupies residues Leu-51–Ser-73. Residues Lys-74 to Ser-142 lie on the Lumenal side of the membrane. Residues Trp-143–Ile-163 form a helical membrane-spanning segment. Residues Tyr-164 to Ala-295 are Cytoplasmic-facing. Residues Thr-186 and Thr-219 each carry the phosphothreonine modification. Over residues Thr-219–Lys-235 the composition is skewed to polar residues. A disordered region spans residues Thr-219–Ala-295. A Phosphoserine modification is found at Ser-232. Residues Ser-265–Ala-295 are a coiled coil.

Interacts with POM33.

The protein localises to the endoplasmic reticulum membrane. The chain is Reticulon-like protein 1 (RTN1) from Saccharomyces cerevisiae (strain ATCC 204508 / S288c) (Baker's yeast).